A 380-amino-acid polypeptide reads, in one-letter code: MASVAELKEKHAAATASVNSLRERLRQRRQMLLDTDVERYSRTQGRTPVSFNPTDLVCCRTLQGHSGKVYSLDWTPEKNWIVSASQDGRLIVWNALTSQKTHAIKLHCPWVMTCAFAPNGQSVACGGLDSACSIFNLNSQADRDGNIPVSRILTGHKGYVSSCQYVPDQETRLITSSGDQTCVLWDVTTGQRISIFGGEFPSGHTADVLSLSINSSISNMFVSGSCDATVRLWDIRIASRAVRTYHGHEGDINSVKFFPDGQRFGTGSDDGTCRLFDVRTGHQLQVYSREPDRNDNELPTVTSIAFSISGRLLFAGYSNGDCYVWDTLLAEVVLNLGNLQNSHEGRISCLGLSSDGSALCTGSWDKNLKIWAFSGHRKIV.

WD repeat units follow at residues 64–103, 106–145, 155–195, 203–243, 247–286, 296–335, and 342–380; these read GHSG…KTHA, LHCP…DRDG, GHKG…RISI, GHTA…RAVR, GHEG…QLQV, NELP…VVLN, and SHEG…RKIV.

It belongs to the WD repeat G protein beta family. As to quaternary structure, g proteins are composed of 3 units, alpha, beta and gamma. Interacts with the gamma subunits RGG1 and RGG2.

The protein resides in the cell membrane. Functionally, guanine nucleotide-binding proteins (G proteins) are involved as modulators or transducers in various transmembrane signaling systems. The beta and gamma chains are required for the GTPase activity, for replacement of GDP by GTP, and for G protein-effector interaction. This is Guanine nucleotide-binding protein subunit beta from Oryza sativa subsp. indica (Rice).